A 153-amino-acid chain; its full sequence is Glucose-6-phosphate 1-dehydrogenase (153 aa).

Residues arginine 21 and lysine 120 each coordinate NADP(+). D-glucose 6-phosphate is bound at residue lysine 120.

This sequence belongs to the glucose-6-phosphate dehydrogenase family.

The protein localises to the cytoplasm. It is found in the cytosol. The catalysed reaction is D-glucose 6-phosphate + NADP(+) = 6-phospho-D-glucono-1,5-lactone + NADPH + H(+). It functions in the pathway carbohydrate degradation; pentose phosphate pathway; D-ribulose 5-phosphate from D-glucose 6-phosphate (oxidative stage): step 1/3. In terms of biological role, cytosolic glucose-6-phosphate dehydrogenase that catalyzes the first and rate-limiting step of the oxidative branch within the pentose phosphate pathway/shunt, an alternative route to glycolysis for the dissimilation of carbohydrates and a major source of reducing power and metabolic intermediates for fatty acid and nucleic acid biosynthetic processes. This chain is Glucose-6-phosphate 1-dehydrogenase (ZW), found in Sarcophaga bullata (Grey flesh fly).